The sequence spans 180 residues: Alkyl hydroperoxide reductase AhpD (180 aa).

The Proton donor role is filled by cysteine 131. Residues cysteine 131 and cysteine 134 are joined by a disulfide bond. Catalysis depends on cysteine 134, which acts as the Cysteine sulfenic acid (-SOH) intermediate.

It belongs to the AhpD family.

It catalyses the reaction N(6)-[(R)-dihydrolipoyl]-L-lysyl-[lipoyl-carrier protein] + a hydroperoxide = N(6)-[(R)-lipoyl]-L-lysyl-[lipoyl-carrier protein] + an alcohol + H2O. Its function is as follows. Antioxidant protein with alkyl hydroperoxidase activity. Required for the reduction of the AhpC active site cysteine residues and for the regeneration of the AhpC enzyme activity. This chain is Alkyl hydroperoxide reductase AhpD, found in Beijerinckia indica subsp. indica (strain ATCC 9039 / DSM 1715 / NCIMB 8712).